We begin with the raw amino-acid sequence, 201 residues long: FMN-dependent NADH:quinone oxidoreductase (201 aa).

Residues serine 10, 16-18 (SQS), 96-99 (MYNF), and 140-143 (SRGG) contribute to the FMN site.

Belongs to the azoreductase type 1 family. As to quaternary structure, homodimer. FMN is required as a cofactor.

The catalysed reaction is 2 a quinone + NADH + H(+) = 2 a 1,4-benzosemiquinone + NAD(+). It catalyses the reaction N,N-dimethyl-1,4-phenylenediamine + anthranilate + 2 NAD(+) = 2-(4-dimethylaminophenyl)diazenylbenzoate + 2 NADH + 2 H(+). Its function is as follows. Quinone reductase that provides resistance to thiol-specific stress caused by electrophilic quinones. Functionally, also exhibits azoreductase activity. Catalyzes the reductive cleavage of the azo bond in aromatic azo compounds to the corresponding amines. The protein is FMN-dependent NADH:quinone oxidoreductase of Pectobacterium atrosepticum (strain SCRI 1043 / ATCC BAA-672) (Erwinia carotovora subsp. atroseptica).